We begin with the raw amino-acid sequence, 751 residues long: Serine/threonine-protein kinase-like protein CCR4 (751 aa).

The signal sequence occupies residues 1–31; that stretch reads MALTISISCFSSYFVSLLLLVLSSFSFVCFS. The Extracellular portion of the chain corresponds to 32–366; the sequence is LSTVSISHIS…NKTWSRRNIA (335 aa). N-linked (GlcNAc...) asparagine glycosylation is found at N42, N51, N98, N243, N254, N283, and N357. A helical transmembrane segment spans residues 367–387; sequence FLVVGCVGTFSLLLVISFLIF. The Cytoplasmic portion of the chain corresponds to 388 to 751; sequence KSHCRCRVHD…TETVSRSNTY (364 aa). The Protein kinase domain maps to 443-733; it reads FSVRFHLGIG…EVVSKLESAL (291 aa). ATP-binding positions include 449 to 457 and K471; that span reads LGIGSFGSV. D579 (proton acceptor) is an active-site residue.

The protein belongs to the protein kinase superfamily. Ser/Thr protein kinase family. In terms of assembly, homodimer. In terms of tissue distribution, expressed in roots, leaves, especially in trichomes, shoot apical meristems (SAM), and, to a lower extent, in floral buds.

The protein localises to the membrane. It carries out the reaction L-seryl-[protein] + ATP = O-phospho-L-seryl-[protein] + ADP + H(+). It catalyses the reaction L-threonyl-[protein] + ATP = O-phospho-L-threonyl-[protein] + ADP + H(+). This chain is Serine/threonine-protein kinase-like protein CCR4 (CCR4), found in Arabidopsis thaliana (Mouse-ear cress).